Reading from the N-terminus, the 536-residue chain is MSITAGPKVTTTAALVNTDRKMNNHHSTQVLHGSGQHGMQPSGNNVLNGLANGATGLQSSASSTSTRDDSTIVGLHYKIGKKIGEGSFGVLFEGVNMINNVPVAIKFEPRKTDAPQLKDEYRTYKILSGSEGIPQAYYFGQEGLHNILVIDLLGPSLEDLFDWCGRRFSIKTVVHVAIQMITLIEELHDHDLIYRDIKPDNFLIGRPNQPDANMVHLIDFGMAKLYRDPKTKQHIPYREKKSLSGTARYMSINTHLGREQSRRDDMEALGHVFFYFLRGQLPWQGLKAANNKLKYEKIGEKKRSTNVYDLSQGLPVQFGRYLEIVRNLGFEETPDYEGYRKLLLSVLDELGQKLDGEYDWMKLNGGRGWDLAINKKPNLHGYGHPTPPNEKSKRHRNKFNQVPLAVNNLNGSNVPLQSHSPLPGGTDLTQGVSNAPQQPQQIMSQQQYQQHTQQRLDPMSYEAYKQQVQQRYAQQPQPTQQKAQKSPNNDTSQQQFSQNRQQQPQYQFQQNQPQNGKVQVADSNSEKGFFSKLGCC.

Residues 26 to 42 (HSTQVLHGSGQHGMQPS) show a composition bias toward polar residues. Residues 26–68 (HSTQVLHGSGQHGMQPSGNNVLNGLANGATGLQSSASSTSTRD) are disordered. The segment covering 43 to 65 (GNNVLNGLANGATGLQSSASSTS) has biased composition (low complexity). Residues 77 to 361 (YKIGKKIGEG…QKLDGEYDWM (285 aa)) enclose the Protein kinase domain. Residues 83 to 91 (IGEGSFGVL) and K106 each bind ATP. The Proton acceptor role is filled by D196. 2 stretches are compositionally biased toward polar residues: residues 407–420 (NNLN…QSHS) and 427–436 (DLTQGVSNAP). Residues 407–524 (NNLNGSNVPL…NGKVQVADSN (118 aa)) are disordered. Composition is skewed to low complexity over residues 437-453 (QQPQ…QHTQ) and 463-514 (AYKQ…NQPQ). S-palmitoyl cysteine attachment occurs at residues C535 and C536.

This sequence belongs to the protein kinase superfamily. CK1 Ser/Thr protein kinase family. Casein kinase I subfamily.

The enzyme catalyses L-seryl-[protein] + ATP = O-phospho-L-seryl-[protein] + ADP + H(+). The catalysed reaction is L-threonyl-[protein] + ATP = O-phospho-L-threonyl-[protein] + ADP + H(+). Casein kinases are operationally defined by their preferential utilization of acidic proteins such as caseins as substrates. The chain is Casein kinase I homolog RAG8 (RAG8) from Kluyveromyces lactis (strain ATCC 8585 / CBS 2359 / DSM 70799 / NBRC 1267 / NRRL Y-1140 / WM37) (Yeast).